The following is a 480-amino-acid chain: UDP-N-acetylmuramoylalanine--D-glutamate ligase (480 aa).

Residue 120-126 (GTNGKTT) coordinates ATP.

This sequence belongs to the MurCDEF family.

It is found in the cytoplasm. It carries out the reaction UDP-N-acetyl-alpha-D-muramoyl-L-alanine + D-glutamate + ATP = UDP-N-acetyl-alpha-D-muramoyl-L-alanyl-D-glutamate + ADP + phosphate + H(+). The protein operates within cell wall biogenesis; peptidoglycan biosynthesis. Cell wall formation. Catalyzes the addition of glutamate to the nucleotide precursor UDP-N-acetylmuramoyl-L-alanine (UMA). The chain is UDP-N-acetylmuramoylalanine--D-glutamate ligase from Nocardia farcinica (strain IFM 10152).